Here is a 536-residue protein sequence, read N- to C-terminus: MAAGSGVAPPPLGVGLCAVKVEEDSPGSQEPSGSGDWQNPETSRKQFRQLRYQEVAGPEEALSRLWELCRRWLRPELRSKEQIMELLVLEQFLTILPRELQAYVRDHCPESGEEAAALARTLQRALDGASLQSFATFKDVAESLTWEEWEQLAAARKGFCRESTKDPGSTVGPGLETKAVTTDVILKQEMSKEAESQAWLQEVSQGKVPVFTKCGDTWEDWEERLPKAAELLPLQSSPEEQGRTAIPHLLGVSKDESDSKDNEFENSGSLVLGQHIQTAEGLVTNGECGEDHKQGLHAKCHTVKPHSSVDNALGLLESQRHFQEGRPYKCDNCEKRFRQRSDLFKHQRTHTGEKPYQCQECGKSFSQSAALVKHQRTHTGEKPYACPECGECFRQSSHLSRHQRTHGSEKYCKCEECGEIFHISSLFKHQRLHKGERPHKCEVCEKSFKQRSDLFKHQRIHTGEKPYMCFVCERRFSQSATLIKHQRTHTGEKPYKCFQCGERFRQSTHLVRHQRIHHNSVSGLRVEKQHGNLLSW.

Residues 18-45 (AVKVEEDSPGSQEPSGSGDWQNPETSRK) are disordered. Lysine 20 is covalently cross-linked (Glycyl lysine isopeptide (Lys-Gly) (interchain with G-Cter in SUMO2)). Over residues 26 to 41 (PGSQEPSGSGDWQNPE) the composition is skewed to polar residues. An SCAN box domain is found at 44–126 (RKQFRQLRYQ…ALARTLQRAL (83 aa)). In terms of domain architecture, KRAB spans 135 to 196 (ATFKDVAESL…KQEMSKEAES (62 aa)). Residues lysine 207 and lysine 260 each participate in a glycyl lysine isopeptide (Lys-Gly) (interchain with G-Cter in SUMO2) cross-link. 3 C2H2-type zinc fingers span residues 328-350 (YKCD…QRTH), 356-378 (YQCQ…QRTH), and 384-406 (YACP…QRTH). A C2H2-type 4; atypical zinc finger spans residues 412 to 433 (CKCEECGEIFHISSLFKHQRLH). Lysine 413 participates in a covalent cross-link: Glycyl lysine isopeptide (Lys-Gly) (interchain with G-Cter in SUMO2). C2H2-type zinc fingers lie at residues 439–461 (HKCE…QRIH), 467–489 (YMCF…QRTH), and 495–517 (YKCF…QRIH).

This sequence belongs to the krueppel C2H2-type zinc-finger protein family.

The protein localises to the nucleus. In terms of biological role, may be involved in transcriptional regulation. The sequence is that of Zinc finger protein 394 (Znf394) from Rattus norvegicus (Rat).